A 224-amino-acid polypeptide reads, in one-letter code: Ribonuclease 3 (224 aa).

Positions 5 to 127 constitute an RNase III domain; the sequence is LERLCRRLNY…ILAAIYLDGG (123 aa). Residue Glu40 participates in Mg(2+) binding. The active site involves Asp44. The Mg(2+) site is built by Asp113 and Glu116. Glu116 is an active-site residue. The DRBM domain occupies 154 to 224; that stretch reads DAKTQLQEFL…AKAMLEQLQG (71 aa).

The protein belongs to the ribonuclease III family. As to quaternary structure, homodimer. It depends on Mg(2+) as a cofactor.

It localises to the cytoplasm. The catalysed reaction is Endonucleolytic cleavage to 5'-phosphomonoester.. Its function is as follows. Digests double-stranded RNA. Involved in the processing of primary rRNA transcript to yield the immediate precursors to the large and small rRNAs (23S and 16S). Processes some mRNAs, and tRNAs when they are encoded in the rRNA operon. Processes pre-crRNA and tracrRNA of type II CRISPR loci if present in the organism. The protein is Ribonuclease 3 of Legionella pneumophila (strain Paris).